Consider the following 324-residue polypeptide: tRNA dimethylallyltransferase (324 aa).

Gly-17 to Thr-24 contacts ATP. A substrate-binding site is contributed by Thr-19–Thr-24. Interaction with substrate tRNA regions lie at residues Asp-42 to Leu-45, Gln-166 to Arg-170, Arg-251 to Arg-256, and Lys-284 to Arg-291.

This sequence belongs to the IPP transferase family. In terms of assembly, monomer. The cofactor is Mg(2+).

It carries out the reaction adenosine(37) in tRNA + dimethylallyl diphosphate = N(6)-dimethylallyladenosine(37) in tRNA + diphosphate. Catalyzes the transfer of a dimethylallyl group onto the adenine at position 37 in tRNAs that read codons beginning with uridine, leading to the formation of N6-(dimethylallyl)adenosine (i(6)A). This Burkholderia ambifaria (strain MC40-6) protein is tRNA dimethylallyltransferase.